The sequence spans 424 residues: Serine--tRNA ligase (424 aa).

Residue 231–233 coordinates L-serine; that stretch reads TAE. 262–264 is a binding site for ATP; that stretch reads RAE. Position 285 (Glu-285) interacts with L-serine. 349 to 352 is a binding site for ATP; it reads EISS. Residue Ser-385 participates in L-serine binding.

Belongs to the class-II aminoacyl-tRNA synthetase family. Type-1 seryl-tRNA synthetase subfamily. In terms of assembly, homodimer. The tRNA molecule binds across the dimer.

It is found in the cytoplasm. It carries out the reaction tRNA(Ser) + L-serine + ATP = L-seryl-tRNA(Ser) + AMP + diphosphate + H(+). The catalysed reaction is tRNA(Sec) + L-serine + ATP = L-seryl-tRNA(Sec) + AMP + diphosphate + H(+). The protein operates within aminoacyl-tRNA biosynthesis; selenocysteinyl-tRNA(Sec) biosynthesis; L-seryl-tRNA(Sec) from L-serine and tRNA(Sec): step 1/1. In terms of biological role, catalyzes the attachment of serine to tRNA(Ser). Is also able to aminoacylate tRNA(Sec) with serine, to form the misacylated tRNA L-seryl-tRNA(Sec), which will be further converted into selenocysteinyl-tRNA(Sec). This Geobacillus thermodenitrificans (strain NG80-2) protein is Serine--tRNA ligase.